The following is a 257-amino-acid chain: Flap endonuclease Xni (257 aa).

Asp-109 lines the Mg(2+) pocket. One can recognise a 5'-3' exonuclease domain in the interval 165 to 255; the sequence is LKPEQLADYW…FNLQDIRYEK (91 aa). K(+)-binding residues include Leu-176, Ala-177, Ile-187, and Ile-190. Residues 189 to 194 form an interaction with DNA region; it reads GIGPKA.

The protein belongs to the Xni family. The cofactor is Mg(2+). It depends on K(+) as a cofactor.

Functionally, has flap endonuclease activity. During DNA replication, flap endonucleases cleave the 5'-overhanging flap structure that is generated by displacement synthesis when DNA polymerase encounters the 5'-end of a downstream Okazaki fragment. This chain is Flap endonuclease Xni, found in Aliivibrio salmonicida (strain LFI1238) (Vibrio salmonicida (strain LFI1238)).